The primary structure comprises 190 residues: CDP-diacylglycerol--glycerol-3-phosphate 3-phosphatidyltransferase (190 aa).

The Cytoplasmic segment spans residues 6 to 17 (GVFNIPMYLTLF). Residues 18–42 (RIIMVPCFVAVFYWPIYWSPMLCTL) form a helical membrane-spanning segment. The Periplasmic portion of the chain corresponds to 43 to 65 (IFFIAAITDWFDGFLARRWNQTS). A helical transmembrane segment spans residues 66-86 (RIGGFLDPIADKIMIITALIL). Over 87-91 (ISEHF) the chain is Cytoplasmic. The helical transmembrane segment at 92 to 112 (HVWWMTLPISSIIIREILISS) threads the bilayer. Over 113–150 (LRECIARVDNKNNISVIWLSKVKTFAQMLALIALLCRL) the chain is Periplasmic. Residues 151 to 173 (NEWTVIMGVISLYTAMLLTLWSM) form a helical membrane-spanning segment. The Cytoplasmic segment spans residues 174 to 186 (CYYVYSVSSILLQ).

The protein belongs to the CDP-alcohol phosphatidyltransferase class-I family.

It localises to the cell inner membrane. The enzyme catalyses a CDP-1,2-diacyl-sn-glycerol + sn-glycerol 3-phosphate = a 1,2-diacyl-sn-glycero-3-phospho-(1'-sn-glycero-3'-phosphate) + CMP + H(+). Its pathway is phospholipid metabolism; phosphatidylglycerol biosynthesis; phosphatidylglycerol from CDP-diacylglycerol: step 1/2. Catalyzes the conversion of cytidine diphosphate diacylglycerol (CDP-DG) and glycerol 3-phosphate into phosphatidylglycerol. Essential for the synthesis of anionic phospholipids, thereby playing a role in balancing the ratio of zwitterionic and anionic phospholipids, which is thought to be important for normal membrane function. The chain is CDP-diacylglycerol--glycerol-3-phosphate 3-phosphatidyltransferase from Blochmanniella floridana.